Here is a 264-residue protein sequence, read N- to C-terminus: Acyl-[acyl-carrier-protein]--UDP-N-acetylglucosamine O-acyltransferase (264 aa).

This sequence belongs to the transferase hexapeptide repeat family. LpxA subfamily. Homotrimer.

The protein localises to the cytoplasm. It catalyses the reaction a (3R)-hydroxyacyl-[ACP] + UDP-N-acetyl-alpha-D-glucosamine = a UDP-3-O-[(3R)-3-hydroxyacyl]-N-acetyl-alpha-D-glucosamine + holo-[ACP]. The protein operates within glycolipid biosynthesis; lipid IV(A) biosynthesis; lipid IV(A) from (3R)-3-hydroxytetradecanoyl-[acyl-carrier-protein] and UDP-N-acetyl-alpha-D-glucosamine: step 1/6. Involved in the biosynthesis of lipid A, a phosphorylated glycolipid that anchors the lipopolysaccharide to the outer membrane of the cell. The sequence is that of Acyl-[acyl-carrier-protein]--UDP-N-acetylglucosamine O-acyltransferase from Actinobacillus pleuropneumoniae serotype 7 (strain AP76).